The following is an 854-amino-acid chain: MNTKEINRVLQDTFNKELTEGKKRHIVFWYDEAGEFIEDIDELNLEGVRIWKLTPHNMFATKLEVEKNDVNSNFLIYANMAKPSAREDWLLDVYKYSQEFATDKMTVMMRELGITNDAALRDVFKKYTKFFKSKEREALFKSFSVPEYTEEQIDLVVLASLCKCNIVNLDEVIKALFREQLKETNKYWENIRKFGNEETFWNLVEKTYGYNLQDKSINSLLIFFLLTNVSETLSGDIPKTWQPYISAIPMNAIVFMNQFMNHSADEVIYNELANTVEKQVKVTEHLQSKEIKDYITSDTFCCFDTNIITYITKQLMNAIHDYTSYIEIIAARRKLHWFSVFRNEYEALYQAIQLFQQIYEMGNAITESQPFDLFKAYESKYHNIDTAYRKFYVAFDQIEDKDGFRALRDKVENIYTNVYINDLAIKWSDALEGEQEEYWPIAGLESQHTFYRSFVQPFVNKEERVFVIISDALRYEVAKELSNMLNVERKASTDIVAMQGVLPSYTDLGMATLLPYKSITFNENAEVYVNDYKASSTENRATILSKHYKDSTAIQYKDLAAMNRQQFRDVFSGKKVSYIYHNVIDARGDHAATEHEVFHAVEQTLKDIRSLVDQLINTVSASNIVITADHGFIYNRDTLQASDKVKKDFLNTDIEKRRFIISSESNSIEGTMNFSMDYVLGEGSGKYVKVPRGANRFAVQGTGANYVHGGAMLQEIVVPVIKFKNDRSKSSKNDVRKVEVKLTSLTRKITNSITYLEFFQTEKIEGKKTPLRLKVYFTDEEGNRISNENIIIADSQSSKPEDRTFKEKFVLKSMTYDKTKKYYLVLEDEEEAVENIYEKVAFPIDIAITNDFGF.

Belongs to the alkaline phosphatase superfamily.

In terms of biological role, BREX systems (bacteriophage exclusion) provide immunity against bacteriophage. A core protein of a type 1 BREX system. This system allows phage adsorption but prevents phage DNA replication, without degradation of the phage DNA. Methylation of bacterial DNA by PglX probably guides self/non-self discrimination. When the brxA-brxB-brxC-pglX and pglZ-brxL operons are transformed into a susceptible B.subtilis strain (BEST7003) they confer resistance to bacteriophages SPbeta, SP16, Zeta, phi3T and SP02 and partial protection to phages SP01 and SP82G (these include lytic and temperate phage). They do not protect against phages phi105, rho10 or rho14. Additionally confers a very slight reduction in efficiency of plasmid transformation. This chain is Alkaline phosphatase-like protein PglZ, found in Bacillus cereus (strain H3081.97).